The following is a 373-amino-acid chain: Opsin Rh1 (373 aa).

The Extracellular portion of the chain corresponds to 1–54; the sequence is MDSFAAVATQLGPHFAALSNGSVVDKVTPDMAHLISPYWNQFPAMDPIWAKILT. N-linked (GlcNAc...) asparagine glycosylation occurs at asparagine 20. The helical transmembrane segment at 55 to 75 threads the bilayer; that stretch reads AYMIIIGMISWCGNGVVIYIF. At 76–86 the chain is on the cytoplasmic side; sequence ATTKSLRTPAN. Residues 87–107 traverse the membrane as a helical segment; the sequence is LLVINLAISDFGIMITNTPMM. At 108–124 the chain is on the extracellular side; sequence GINLYFETWVLGPMMCD. Cysteine 123 and cysteine 200 are disulfide-bonded. A helical transmembrane segment spans residues 125–145; that stretch reads IYAGLGSAFGCSSIWSMCMIS. The Cytoplasmic portion of the chain corresponds to 146–162; the sequence is LDRYQVIVKGMAGRPMT. Residues 163–183 traverse the membrane as a helical segment; the sequence is IPLALGKIAYIWFMSSIWCLA. At 184 to 219 the chain is on the extracellular side; it reads PVFGWSRYVPEGNLTSCGIDYLERDWNPRSYLIFYS. N-linked (GlcNAc...) asparagine glycosylation occurs at asparagine 196. The helical transmembrane segment at 220 to 240 threads the bilayer; sequence IFVYYIPLFLICYSYWFIIAA. Over 241 to 276 the chain is Cytoplasmic; the sequence is VSAHEKAMREQAKKMNVKSLRSSEDADKSAEGKLAK. The helical transmembrane segment at 277-297 threads the bilayer; that stretch reads VALVTISLWFMAWTPYLVINC. The Extracellular segment spans residues 298 to 308; that stretch reads MGLFKFEGLTP. Residues 309–331 traverse the membrane as a helical segment; sequence LNTIWGACFAKSAACYNPIVYGI. Position 319 is an N6-(retinylidene)lysine (lysine 319). The Cytoplasmic portion of the chain corresponds to 332–373; that stretch reads SHPKYRLALKEKCPCCVFGKVDDGKSSEAQSQATNSEAESKA. Positions 354-373 are disordered; that stretch reads DGKSSEAQSQATNSEAESKA. The span at 358 to 373 shows a compositional bias: polar residues; it reads SEAQSQATNSEAESKA.

The protein belongs to the G-protein coupled receptor 1 family. Opsin subfamily. Post-translationally, phosphorylated on some or all of the serine and threonine residues present in the C-terminal region.

The protein localises to the cell projection. It localises to the rhabdomere membrane. Its function is as follows. Visual pigments are the light-absorbing molecules that mediate vision. They consist of an apoprotein, opsin, covalently linked to cis-retinal. This is Opsin Rh1 (ninaE) from Drosophila pseudoobscura pseudoobscura (Fruit fly).